Reading from the N-terminus, the 181-residue chain is Protein GrpE (181 aa).

Positions 1 to 21 are disordered; it reads MNKEQQDLQTEQEAAVETAEL. Positions 8–21 are enriched in low complexity; sequence LQTEQEAAVETAEL.

Belongs to the GrpE family. In terms of assembly, homodimer.

The protein resides in the cytoplasm. Functionally, participates actively in the response to hyperosmotic and heat shock by preventing the aggregation of stress-denatured proteins, in association with DnaK and GrpE. It is the nucleotide exchange factor for DnaK and may function as a thermosensor. Unfolded proteins bind initially to DnaJ; upon interaction with the DnaJ-bound protein, DnaK hydrolyzes its bound ATP, resulting in the formation of a stable complex. GrpE releases ADP from DnaK; ATP binding to DnaK triggers the release of the substrate protein, thus completing the reaction cycle. Several rounds of ATP-dependent interactions between DnaJ, DnaK and GrpE are required for fully efficient folding. The polypeptide is Protein GrpE (Trichlorobacter lovleyi (strain ATCC BAA-1151 / DSM 17278 / SZ) (Geobacter lovleyi)).